We begin with the raw amino-acid sequence, 428 residues long: Adenylosuccinate synthetase (428 aa).

Residues 12 to 18 (GDEGKGK) and 40 to 42 (GHT) each bind GTP. The active-site Proton acceptor is Asp-13. The Mg(2+) site is built by Asp-13 and Gly-40. IMP-binding positions include 13-16 (DEGK), 38-41 (NAGH), Thr-128, Arg-142, Gln-223, Thr-238, and Arg-302. His-41 functions as the Proton donor in the catalytic mechanism. A substrate-binding site is contributed by 298 to 304 (VTTGRPR). GTP-binding positions include Arg-304, 330–332 (KLD), and 412–414 (GVG).

This sequence belongs to the adenylosuccinate synthetase family. As to quaternary structure, homodimer. Mg(2+) serves as cofactor.

The protein localises to the cytoplasm. It carries out the reaction IMP + L-aspartate + GTP = N(6)-(1,2-dicarboxyethyl)-AMP + GDP + phosphate + 2 H(+). Its pathway is purine metabolism; AMP biosynthesis via de novo pathway; AMP from IMP: step 1/2. In terms of biological role, plays an important role in the de novo pathway of purine nucleotide biosynthesis. Catalyzes the first committed step in the biosynthesis of AMP from IMP. The polypeptide is Adenylosuccinate synthetase (Halothermothrix orenii (strain H 168 / OCM 544 / DSM 9562)).